We begin with the raw amino-acid sequence, 85 residues long: MNMFITVQIVIVLVLAVLSEAASLPTATERKDAMDEGPNQSDEPEGSVADPSTKDDDYSDSLKQDEKYYKVRLLNTGDKFYGLMG.

Positions 1-23 (MNMFITVQIVIVLVLAVLSEAAS) are cleaved as a signal peptide. A propeptide spanning residues 24–74 (LPTATERKDAMDEGPNQSDEPEGSVADPSTKDDDYSDSLKQDEKYYKVRLL) is cleaved from the precursor. The segment at 26-61 (TATERKDAMDEGPNQSDEPEGSVADPSTKDDDYSDS) is disordered. Basic and acidic residues predominate over residues 52-61 (STKDDDYSDS). Methionine amide is present on Met-84.

It belongs to the tachykinin family. As to expression, expressed exclusively in the medial lobe of female salivary gland. Not detected in female carcass without head and salivary glands. Not detected in male tissues.

It localises to the secreted. Vasodilatory peptide. Facilitates mosquito blood feeding on vertebrate host. Induces nitric oxide (NO) release in blood vessels through the activation of the nitric oxide synthase (NOS3). Enhances endothelial permeability and induces edema at the site of inoculation in the host. Induces host smooth muscle contraction. Down-regulates production of Th1 cytokines, such as IL2 and IFN-gamma (IFNG), in mouse splenocytes. Up-regulates production of Th2 cytokines, such as IL4 and IL10, in mouse splenocytes. Promotes recruitment of host leukocytes, especially neutrophils and CD8+ T cells, to the bite site. Modulates cytokine production by host macrophages. Modulates populations of monocytes/macrophages, plasmacytoid dendritic cells, B cells, CD4+ T cells, NK and NKT cells, shifting mammalian immunity towards Th2 responses. Functionally, (Microbial infection) Promotes Semliki Forest virus infection in the host. Its function is as follows. (Microbial infection) Does not affect Zika virus replication in the host. This Aedes aegypti (Yellowfever mosquito) protein is Prosialokinin.